The chain runs to 92 residues: uncharacterized protein (92 aa).

The protein belongs to the IUNH family.

This is an uncharacterized protein from Corynebacterium ammoniagenes (Brevibacterium ammoniagenes).